Consider the following 115-residue polypeptide: Large ribosomal subunit protein bL19 (115 aa).

It belongs to the bacterial ribosomal protein bL19 family.

Functionally, this protein is located at the 30S-50S ribosomal subunit interface and may play a role in the structure and function of the aminoacyl-tRNA binding site. The chain is Large ribosomal subunit protein bL19 from Streptococcus thermophilus (strain CNRZ 1066).